The following is an 886-amino-acid chain: Semaphorin-6B (886 aa).

An N-terminal signal peptide occupies residues 1–26; it reads MWTPRVPPPRPALSFFLLLLLGVTYG. Over 27–605 the chain is Extracellular; that stretch reads LFPEEPPPLS…VSVNLLVTSS (579 aa). A Sema domain is found at 32-525; it reads PPPLSVAPRD…FPRCVVRVPV (494 aa). Asparagine 75 is a glycosylation site (N-linked (GlcNAc...) asparagine). 2 cysteine pairs are disulfide-bonded: cysteine 117–cysteine 127 and cysteine 145–cysteine 154. N-linked (GlcNAc...) asparagine glycans are attached at residues asparagine 156 and asparagine 292. Intrachain disulfides connect cysteine 268–cysteine 379 and cysteine 293–cysteine 338. N-linked (GlcNAc...) asparagine glycosylation is found at asparagine 387, asparagine 442, and asparagine 463. Cystine bridges form between cysteine 487–cysteine 519, cysteine 528–cysteine 546, cysteine 534–cysteine 580, and cysteine 538–cysteine 554. The chain crosses the membrane as a helical span at residues 606–626; it reads VAAFVVGAVVSGFSVGWFVGL. The Cytoplasmic segment spans residues 627–886; it reads RERRELARRK…TGERTAPPVP (260 aa). Disordered stretches follow at residues 655–677, 697–731, and 761–886; these read RLGE…PGGP, HGGP…AHAL, and EQPQ…PPVP. Over residues 662–674 the composition is skewed to gly residues; sequence TGPGGRGGAGGGP. Position 667 is an omega-N-methylarginine (arginine 667). Residues 707 to 718 show a composition bias toward low complexity; sequence LLPTPEQTPLPQ.

Belongs to the semaphorin family. As to quaternary structure, homodimer. Binds specifically the SH3 domain of the protooncogene C-SRC. In terms of tissue distribution, in adulthood, it is expressed ubiquitously.

It localises to the cell membrane. Functions as a cell surface repellent for mossy fibers of developing neurons in the hippocampus where it plays a role in axon guidance. May function through the PLXNA4 receptor expressed by mossy cell axons. This Mus musculus (Mouse) protein is Semaphorin-6B (Sema6b).